We begin with the raw amino-acid sequence, 447 residues long: Tubulin beta chain (447 aa).

8 residues coordinate GTP: Gln11, Glu69, Ser138, Gly142, Thr143, Gly144, Asn204, and Asn226. A Mg(2+)-binding site is contributed by Glu69. A disordered region spans residues 424–447 (QYQDASISEGEEDYEEEPQVENEE). Positions 432 to 447 (EGEEDYEEEPQVENEE) are enriched in acidic residues.

The protein belongs to the tubulin family. In terms of assembly, dimer of alpha and beta chains. A typical microtubule is a hollow water-filled tube with an outer diameter of 25 nm and an inner diameter of 15 nM. Alpha-beta heterodimers associate head-to-tail to form protofilaments running lengthwise along the microtubule wall with the beta-tubulin subunit facing the microtubule plus end conferring a structural polarity. Microtubules usually have 13 protofilaments but different protofilament numbers can be found in some organisms and specialized cells. Requires Mg(2+) as cofactor.

The protein localises to the cytoplasm. The protein resides in the cytoskeleton. Its function is as follows. Tubulin is the major constituent of microtubules, a cylinder consisting of laterally associated linear protofilaments composed of alpha- and beta-tubulin heterodimers. Microtubules grow by the addition of GTP-tubulin dimers to the microtubule end, where a stabilizing cap forms. Below the cap, tubulin dimers are in GDP-bound state, owing to GTPase activity of alpha-tubulin. This chain is Tubulin beta chain, found in Uncinula necator (Grape powdery mildew).